We begin with the raw amino-acid sequence, 293 residues long: Ethanolamine ammonia-lyase small subunit (293 aa).

The adenosylcob(III)alamin site is built by Val207 and Glu228.

This sequence belongs to the EutC family. The basic unit is a heterodimer which dimerizes to form tetramers. The heterotetramers trimerize; 6 large subunits form a core ring with 6 small subunits projecting outwards. Adenosylcob(III)alamin serves as cofactor.

It is found in the bacterial microcompartment. The enzyme catalyses ethanolamine = acetaldehyde + NH4(+). It participates in amine and polyamine degradation; ethanolamine degradation. Its function is as follows. Catalyzes the deamination of various vicinal amino-alcohols to oxo compounds. Allows this organism to utilize ethanolamine as the sole source of nitrogen and carbon in the presence of external vitamin B12. This chain is Ethanolamine ammonia-lyase small subunit, found in Listeria innocua serovar 6a (strain ATCC BAA-680 / CLIP 11262).